A 317-amino-acid polypeptide reads, in one-letter code: Cytochrome c biogenesis protein CcsA (317 aa).

8 helical membrane-spanning segments follow: residues Ile9 to Phe29, Thr46 to Ser63, Leu71 to Phe91, Leu98 to Leu118, Met143 to Ile163, Ile225 to Asn245, Glu258 to His273, and Ala286 to Leu306.

Belongs to the CcmF/CycK/Ccl1/NrfE/CcsA family. May interact with Ccs1.

It localises to the plastid. The protein resides in the chloroplast thylakoid membrane. In terms of biological role, required during biogenesis of c-type cytochromes (cytochrome c6 and cytochrome f) at the step of heme attachment. This is Cytochrome c biogenesis protein CcsA from Citrus sinensis (Sweet orange).